We begin with the raw amino-acid sequence, 182 residues long: UPF0215 protein Pcal_0119 (182 aa).

The protein belongs to the UPF0215 family.

The chain is UPF0215 protein Pcal_0119 from Pyrobaculum calidifontis (strain DSM 21063 / JCM 11548 / VA1).